Consider the following 333-residue polypeptide: Polygalacturonase inhibitor (333 aa).

Positions 1-27 are cleaved as a signal peptide; sequence METSKLFLLSSSLLLVLLATRPCPSLS. 2 disulfide bridges follow: cysteine 30–cysteine 60 and cysteine 61–cysteine 68. LRR repeat units lie at residues 72–96, 97–120, 121–144, 145–169, 170–192, 194–220, 221–240, 241–263, 264–288, and 290–312; these read THRI…VGDL, PFLE…AIAK, LKHL…FFSE, LKNL…LSLL, PNLG…SFGK, AGST…GFDP, NVMD…FFNA, NKST…RVEF, PKSL…MTSL, and LQFL…KLQS. Residues asparagine 109, asparagine 133, asparagine 147, and asparagine 157 are each glycosylated (N-linked (GlcNAc...) asparagine). N-linked (GlcNAc...) asparagine glycosylation occurs at asparagine 241. N-linked (GlcNAc...) asparagine glycosylation is present at asparagine 294. Cystine bridges form between cysteine 301–cysteine 323 and cysteine 325–cysteine 332.

Belongs to the polygalacturonase-inhibiting protein family.

Its subcellular location is the secreted. The protein resides in the cell wall. The protein localises to the membrane. In terms of biological role, inhibitor of fungal polygalacturonase. It is an important factor for plant resistance to phytopathogenic fungi. The polypeptide is Polygalacturonase inhibitor (pgip) (Vitis vinifera (Grape)).